The primary structure comprises 1463 residues: DNA polymerase III PolC-type (1463 aa).

Positions 425 to 581 (YVVFDVETTG…YDAEATGRLL (157 aa)) constitute an Exonuclease domain.

The protein belongs to the DNA polymerase type-C family. PolC subfamily.

The protein resides in the cytoplasm. The enzyme catalyses DNA(n) + a 2'-deoxyribonucleoside 5'-triphosphate = DNA(n+1) + diphosphate. Functionally, required for replicative DNA synthesis. This DNA polymerase also exhibits 3' to 5' exonuclease activity. This chain is DNA polymerase III PolC-type, found in Streptococcus pneumoniae serotype 2 (strain D39 / NCTC 7466).